Consider the following 76-residue polypeptide: uncharacterized protein (76 aa).

This is an uncharacterized protein from Mycobacterium tuberculosis (strain ATCC 25618 / H37Rv).